The chain runs to 342 residues: Nuclear hormone receptor family member nhr-150 (342 aa).

A DNA-binding region (nuclear receptor) is located at residues 1-71; sequence MCQVCGAAEA…AGMTSKKIQS (71 aa). An NR C4-type zinc finger spans residues 2 to 22; the sequence is CQVCGAAEADLHFGGISCRAC. An NR C4-type; degenerate zinc finger spans residues 39 to 54; it reads CTCKTRILDSHPCRSC. The region spanning 94 to 341 is the NR LBD domain; the sequence is SARIIPRSSL…GFMEIIRESK (248 aa).

The protein belongs to the nuclear hormone receptor family.

It is found in the nucleus. In terms of biological role, orphan nuclear receptor. This is Nuclear hormone receptor family member nhr-150 (nhr-150) from Caenorhabditis elegans.